A 315-amino-acid polypeptide reads, in one-letter code: Homoserine O-succinyltransferase (315 aa).

The active-site Acyl-thioester intermediate is the Cys142. Residues Lys163 and Ser192 each contribute to the substrate site. His235 serves as the catalytic Proton acceptor. Glu237 is an active-site residue. Substrate is bound at residue Arg249. The segment covering 249–258 (RDCEKSDNAP) has biased composition (basic and acidic residues). Residues 249-271 (RDCEKSDNAPKPENYFPDDDATK) form a disordered region.

The protein belongs to the MetA family.

Its subcellular location is the cytoplasm. The enzyme catalyses L-homoserine + succinyl-CoA = O-succinyl-L-homoserine + CoA. Its pathway is amino-acid biosynthesis; L-methionine biosynthesis via de novo pathway; O-succinyl-L-homoserine from L-homoserine: step 1/1. In terms of biological role, transfers a succinyl group from succinyl-CoA to L-homoserine, forming succinyl-L-homoserine. The protein is Homoserine O-succinyltransferase of Pseudoalteromonas translucida (strain TAC 125).